We begin with the raw amino-acid sequence, 455 residues long: MTKGLYIESYGCQMNVYDSLMVEDILRPLGFAAVQRPEDADIIMVNTCHVREKAAEKLYSALGRMRMLRKEGALIVVAGCVAQAEGEAVFERAPFVDVVVGPQSIHTLPELIMKATRDAKQMNVEFPAISKFDVISTDLLVSRGVSAFVSVQEGCDKFCTFCVVPYTRGPEYSRSVEDVLAEVRKLADGGTKEVVLLGQNVNAYHGTYKGNEWDLGRLIRKVAEVEGIERIRYTTSHPRDMHSSLYDAHKHEPKLLPCVHLPVQSGSDSVLRKMNRKHSVQEYMDIIDTLKEARSDIALSSDFIVGFPGETEEDFEATMDLVRHVGFATSYSFKYSPRPGTPGAEYTNQVPEEEKSSRLHRLQHLLLTQQRLFTKSMIGKTVSVLVCGTEGSRSCSNEVFGKSEHMQPVYISVDGDPAGYRNKIFSVKVLEEGARSSLKGIICTDTISLPPPHSM.

An MTTase N-terminal domain is found at 3–117 (KGLYIESYGC…LPELIMKATR (115 aa)). [4Fe-4S] cluster contacts are provided by Cys12, Cys48, Cys80, Cys155, Cys159, and Cys162. The 235-residue stretch at 141–375 (VSRGVSAFVS…LLTQQRLFTK (235 aa)) folds into the Radical SAM core domain.

Belongs to the methylthiotransferase family. MiaB subfamily. As to quaternary structure, monomer. The cofactor is [4Fe-4S] cluster.

The protein resides in the cytoplasm. It carries out the reaction N(6)-dimethylallyladenosine(37) in tRNA + (sulfur carrier)-SH + AH2 + 2 S-adenosyl-L-methionine = 2-methylsulfanyl-N(6)-dimethylallyladenosine(37) in tRNA + (sulfur carrier)-H + 5'-deoxyadenosine + L-methionine + A + S-adenosyl-L-homocysteine + 2 H(+). Catalyzes the methylthiolation of N6-(dimethylallyl)adenosine (i(6)A), leading to the formation of 2-methylthio-N6-(dimethylallyl)adenosine (ms(2)i(6)A) at position 37 in tRNAs that read codons beginning with uridine. The chain is tRNA-2-methylthio-N(6)-dimethylallyladenosine synthase from Anaplasma marginale (strain St. Maries).